The following is a 144-amino-acid chain: Large ribosomal subunit protein uL11 (144 aa).

This sequence belongs to the universal ribosomal protein uL11 family. As to quaternary structure, part of the ribosomal stalk of the 50S ribosomal subunit. Interacts with L10 and the large rRNA to form the base of the stalk. L10 forms an elongated spine to which L12 dimers bind in a sequential fashion forming a multimeric L10(L12)X complex. Post-translationally, one or more lysine residues are methylated.

Its function is as follows. Forms part of the ribosomal stalk which helps the ribosome interact with GTP-bound translation factors. The protein is Large ribosomal subunit protein uL11 of Streptomyces coelicolor (strain ATCC BAA-471 / A3(2) / M145).